A 526-amino-acid polypeptide reads, in one-letter code: Bifunctional purine biosynthesis protein PurH (526 aa).

In terms of domain architecture, MGS-like spans 1–148; sequence MQRPIIIRRA…KNYSNVVVVV (148 aa).

The protein belongs to the PurH family.

It carries out the reaction (6R)-10-formyltetrahydrofolate + 5-amino-1-(5-phospho-beta-D-ribosyl)imidazole-4-carboxamide = 5-formamido-1-(5-phospho-D-ribosyl)imidazole-4-carboxamide + (6S)-5,6,7,8-tetrahydrofolate. The catalysed reaction is IMP + H2O = 5-formamido-1-(5-phospho-D-ribosyl)imidazole-4-carboxamide. It participates in purine metabolism; IMP biosynthesis via de novo pathway; 5-formamido-1-(5-phospho-D-ribosyl)imidazole-4-carboxamide from 5-amino-1-(5-phospho-D-ribosyl)imidazole-4-carboxamide (10-formyl THF route): step 1/1. It functions in the pathway purine metabolism; IMP biosynthesis via de novo pathway; IMP from 5-formamido-1-(5-phospho-D-ribosyl)imidazole-4-carboxamide: step 1/1. In Baumannia cicadellinicola subsp. Homalodisca coagulata, this protein is Bifunctional purine biosynthesis protein PurH.